The chain runs to 273 residues: Probable glycerophosphodiester phosphodiesterase GpdQ (273 aa).

Fe cation-binding residues include Asp8, His10, Asp50, Asn80, His154, His194, and His196.

It belongs to the cyclic nucleotide phosphodiesterase class-III family. The cofactor is Fe(2+).

It catalyses the reaction a sn-glycero-3-phosphodiester + H2O = an alcohol + sn-glycerol 3-phosphate + H(+). The catalysed reaction is sn-glycero-3-phosphoethanolamine + H2O = ethanolamine + sn-glycerol 3-phosphate + H(+). Functionally, catalyzes the hydrolysis of the 3'-5' phosphodiester bond of glycerophosphodiesters such as glycerophosphorylethanolamine (GPE), a typical phospholipid metabolite. The chain is Probable glycerophosphodiester phosphodiesterase GpdQ from Arcobacter nitrofigilis (strain ATCC 33309 / DSM 7299 / CCUG 15893 / LMG 7604 / NCTC 12251 / CI) (Campylobacter nitrofigilis).